The primary structure comprises 160 residues: SsrA-binding protein (160 aa).

The protein belongs to the SmpB family.

Its subcellular location is the cytoplasm. Required for rescue of stalled ribosomes mediated by trans-translation. Binds to transfer-messenger RNA (tmRNA), required for stable association of tmRNA with ribosomes. tmRNA and SmpB together mimic tRNA shape, replacing the anticodon stem-loop with SmpB. tmRNA is encoded by the ssrA gene; the 2 termini fold to resemble tRNA(Ala) and it encodes a 'tag peptide', a short internal open reading frame. During trans-translation Ala-aminoacylated tmRNA acts like a tRNA, entering the A-site of stalled ribosomes, displacing the stalled mRNA. The ribosome then switches to translate the ORF on the tmRNA; the nascent peptide is terminated with the 'tag peptide' encoded by the tmRNA and targeted for degradation. The ribosome is freed to recommence translation, which seems to be the essential function of trans-translation. This chain is SsrA-binding protein, found in Sodalis glossinidius (strain morsitans).